A 1183-amino-acid chain; its full sequence is Rab11 family-interacting protein 3 (1183 aa).

Positions 423–448 (AEDPSTESLPRKNGQEESKSALPVST) are disordered. The span at 431–441 (LPRKNGQEESK) shows a compositional bias: basic and acidic residues. 2 consecutive EF-hand domains span residues 706 to 741 (EEQS…YGAE) and 738 to 773 (YGAE…ISNE). Asp719, Asp721, Asp723, Glu730, Asp751, Ser753, and Asp762 together coordinate Ca(2+). Residues 902 to 1121 (ELEKDSLESE…NGQIINLSIQ (220 aa)) adopt a coiled-coil conformation. The segment at 911–1015 (EEQHARLRQE…LQDEADDITQ (105 aa)) is ARF-binding domain (ABD). Residues 1005–1044 (KLQDEADDITQRLNEESESRRKMSDKLSHERHTNQKEKEC) form a disordered region. An FIP-RBD domain is found at 1121-1183 (QGAKSLFTES…ESNPSILEVK (63 aa)).

The protein resides in the recycling endosome membrane. Its subcellular location is the cytoplasm. The protein localises to the cytoskeleton. It localises to the microtubule organizing center. It is found in the centrosome. The protein resides in the cleavage furrow. Its subcellular location is the midbody. The protein localises to the golgi apparatus membrane. It localises to the golgi apparatus. It is found in the trans-Golgi network membrane. Downstream effector molecule for Rab11 GTPase which acts as a regulator of endocytic trafficking, cytokinesis and intracellular ciliogenesis by participating in membrane delivery. This chain is Rab11 family-interacting protein 3 (rab11fip3), found in Danio rerio (Zebrafish).